Here is an 83-residue protein sequence, read N- to C-terminus: Cytotoxin homolog 5 (83 aa).

The N-terminal stretch at 1–21 (MKTLLLTMVVVTIVCLDLGYT) is a signal peptide. Intrachain disulfides connect Cys-24/Cys-43, Cys-36/Cys-61, Cys-65/Cys-76, and Cys-77/Cys-82.

The protein belongs to the three-finger toxin family. Short-chain subfamily. Orphan group XV sub-subfamily. As to expression, expressed by the venom gland.

The protein resides in the secreted. It is found in the target cell membrane. Its function is as follows. Has low cytotoxic activity. The polypeptide is Cytotoxin homolog 5 (Naja atra (Chinese cobra)).